A 93-amino-acid chain; its full sequence is Protein IDA-LIKE 4 (93 aa).

The first 35 residues, 1–35 (MYPTRPHYWRRRLSINRPQAFLLLILCLFFIHHCD), serve as a signal peptide directing secretion.

Expressed in mainly in buds. Lower levels in roots. Detected at the base of pedicel, in the floral and funicule abscission zones, in vascular tissues, in guard cells of young seedlings and in hydathodes.

Its subcellular location is the secreted. It is found in the extracellular space. May be involved in floral abscission. This is Protein IDA-LIKE 4 (IDL4) from Arabidopsis thaliana (Mouse-ear cress).